Reading from the N-terminus, the 427-residue chain is Glutamate-1-semialdehyde 2,1-aminomutase (427 aa).

K265 is modified (N6-(pyridoxal phosphate)lysine).

It belongs to the class-III pyridoxal-phosphate-dependent aminotransferase family. HemL subfamily. Homodimer. It depends on pyridoxal 5'-phosphate as a cofactor.

It localises to the cytoplasm. It carries out the reaction (S)-4-amino-5-oxopentanoate = 5-aminolevulinate. It functions in the pathway porphyrin-containing compound metabolism; protoporphyrin-IX biosynthesis; 5-aminolevulinate from L-glutamyl-tRNA(Glu): step 2/2. This is Glutamate-1-semialdehyde 2,1-aminomutase from Pseudomonas putida (strain ATCC 700007 / DSM 6899 / JCM 31910 / BCRC 17059 / LMG 24140 / F1).